A 160-amino-acid polypeptide reads, in one-letter code: Major pollen allergen Bet v 1-E (160 aa).

Residues Lys55, Tyr82, Tyr84, and Asn101 each contribute to the brassinolide site.

This sequence belongs to the BetVI family.

It is found in the cytoplasm. Its function is as follows. May be a general steroid carrier protein. The polypeptide is Major pollen allergen Bet v 1-E (BETV1E) (Betula pendula (European white birch)).